The sequence spans 243 residues: Probable 2-phosphosulfolactate phosphatase (243 aa).

Belongs to the ComB family. It depends on Mg(2+) as a cofactor.

The enzyme catalyses (2R)-O-phospho-3-sulfolactate + H2O = (2R)-3-sulfolactate + phosphate. The polypeptide is Probable 2-phosphosulfolactate phosphatase (Prochlorococcus marinus (strain MIT 9313)).